The chain runs to 79 residues: MSFEVFEKLEAKVQQAVDTITLLQMEIEELKDKNNQLAQEVQNAQGSREALEHENHQLREQQHVWQERLQALLGKMEEV.

Residues 4 to 78 (EVFEKLEAKV…LQALLGKMEE (75 aa)) are a coiled coil.

The protein belongs to the ZapB family. Homodimer. The ends of the coiled-coil dimer bind to each other, forming polymers. Interacts with FtsZ.

Its subcellular location is the cytoplasm. Its function is as follows. Non-essential, abundant cell division factor that is required for proper Z-ring formation. It is recruited early to the divisome by direct interaction with FtsZ, stimulating Z-ring assembly and thereby promoting cell division earlier in the cell cycle. Its recruitment to the Z-ring requires functional FtsA or ZipA. In Cronobacter sakazakii (strain ATCC BAA-894) (Enterobacter sakazakii), this protein is Cell division protein ZapB.